Reading from the N-terminus, the 580-residue chain is Type 3 secretion system translocon protein SctE (580 aa).

2 helical membrane passes run 313-333 (ILGA…GGAS) and 399-419 (IGSI…VVLV).

It belongs to the SctE/SipB/YopB family. The core secretion machinery of the T3SS is composed of approximately 20 different proteins, including cytoplasmic components, a base, an export apparatus and a needle. This subunit is involved in the formation of a pore, called the translocon, in host membrane.

The protein localises to the secreted. It is found in the host membrane. Its function is as follows. Component of the type III secretion system (T3SS), also called injectisome, which is used to inject bacterial effector proteins into eukaryotic host cells. IpaB/SctE and IpaC/SctB are inserted into the host membrane where they form a pore and allow the translocation of effector proteins into the cytosol of target cells. The polypeptide is Type 3 secretion system translocon protein SctE (Shigella dysenteriae).